A 580-amino-acid chain; its full sequence is Alpha-glucosidase (580 aa).

An N-terminal signal peptide occupies residues 1-19 (MRPLGALSLFALLATTVSG). N-linked (GlcNAc...) asparagine glycans are attached at residues N102 and N127. The active-site Nucleophile is D224. E290 (proton donor) is an active-site residue. An N-linked (GlcNAc...) asparagine glycan is attached at N501. Residues 560–580 (AAAINLSIGLLLAIMARYIFV) form a helical membrane-spanning segment.

This sequence belongs to the glycosyl hydrolase 13 family. As to quaternary structure, (Microbial infection) Binds to L.sphaericus BinB subunit of the binary toxin BinAB. In 4th-instar larvae produced in the brush border membranes of the gastric caeca and the posterior stomach cells (at protein level).

The protein resides in the membrane. It catalyses the reaction Hydrolysis of terminal, non-reducing (1-&gt;4)-linked alpha-D-glucose residues with release of alpha-D-glucose.. Its function is as follows. Probably an alpha-glucosidase, it has no alpha-amylase function. In terms of biological role, (Microbial infection) Serves as the larval receptor for Lysinibacillus sphaericus BinB toxin. This is Alpha-glucosidase from Culex pipiens (House mosquito).